The chain runs to 122 residues: Large ribosomal subunit protein uL14 (122 aa).

This sequence belongs to the universal ribosomal protein uL14 family. Part of the 50S ribosomal subunit. Forms a cluster with proteins L3 and L19. In the 70S ribosome, L14 and L19 interact and together make contacts with the 16S rRNA in bridges B5 and B8.

Its function is as follows. Binds to 23S rRNA. Forms part of two intersubunit bridges in the 70S ribosome. In Pseudomonas fluorescens (strain ATCC BAA-477 / NRRL B-23932 / Pf-5), this protein is Large ribosomal subunit protein uL14.